Here is a 48-residue protein sequence, read N- to C-terminus: MKIQIKGMKQLSNKEMQKIVGGKSSAYSLQMGATAIKQVKKLFKKWGW.

A propeptide spanning residues 1 to 25 (MKIQIKGMKQLSNKEMQKIVGGKSS) is cleaved from the precursor.

In terms of assembly, active plantaricin A is composed of an alpha chain and a beta chain.

Its function is as follows. This heat stable bacteriocin inhibits the growth of closely related Lactobacillus species. It may act as a pore-forming protein, creating a channel in the cell membrane through a 'barrel stave' mechanism. The sequence is that of Bacteriocin plantaricin-A (plnA) from Lactiplantibacillus plantarum (strain ATCC BAA-793 / NCIMB 8826 / WCFS1) (Lactobacillus plantarum).